A 656-amino-acid polypeptide reads, in one-letter code: UV-damage endonuclease (656 aa).

Disordered regions lie at residues 1–82, 119–146, 175–194, 241–264, 492–515, 550–620, and 636–656; these read MPSR…GKEQ, PSVV…KEPV, IIEP…RPPA, PLQF…EPQD, EPCD…TLPP, DMVP…GPYN, and KREV…EFDG. A compositionally biased stretch (low complexity) spans 13–32; it reads TPQSESSTFSSTLDSSAPSP. Composition is skewed to basic and acidic residues over residues 48–82 and 135–146; these read SEKD…GKEQ and TNAEEREAKEPV. A compositionally biased stretch (basic and acidic residues) spans 550–561; that stretch reads DMVPYDRDDENR. A compositionally biased stretch (basic residues) spans 568-579; sequence APKKKKGGKRKR. Over residues 583–595 the composition is skewed to acidic residues; sequence EEAAEPEEVDTAA. Over residues 596-614 the composition is skewed to basic and acidic residues; the sequence is DDVKDAPEGPKEVPEEERA. The segment covering 647-656 has biased composition (acidic residues); that stretch reads EVEDEGEFDG.

The protein belongs to the uve1/UvsE family. The cofactor is Mg(2+).

In terms of biological role, endonuclease for the repair of UV-irradiated DNA. Involved in the excision of cyclobutane pyrimidine dimers (CPD) and 6-4 pyrimidine pyrimidones (6-4PP) which forms the UV damage repair (UVDR) pathway. This is UV-damage endonuclease (mus-18) from Neurospora crassa (strain ATCC 24698 / 74-OR23-1A / CBS 708.71 / DSM 1257 / FGSC 987).